The sequence spans 138 residues: Homeobox protein HD-11 (138 aa).

The segment at residues 30–89 (CTGKQMRKTRLQTCVLNRIFEISRFPSSKTIVDLALLINVHPKSIQKWFQNTRQAIRKKG) is a DNA-binding region (homeobox).

The protein resides in the nucleus. The polypeptide is Homeobox protein HD-11 (HD-11) (Encephalitozoon cuniculi (strain GB-M1) (Microsporidian parasite)).